The primary structure comprises 321 residues: UDP-N-acetylenolpyruvoylglucosamine reductase (321 aa).

In terms of domain architecture, FAD-binding PCMH-type spans 39–205 (RTGGLAELFY…TAALLEGEPG (167 aa)). Arg185 is a catalytic residue. Ser234 serves as the catalytic Proton donor. The active site involves Glu304.

The protein belongs to the MurB family. The cofactor is FAD.

The protein localises to the cytoplasm. The catalysed reaction is UDP-N-acetyl-alpha-D-muramate + NADP(+) = UDP-N-acetyl-3-O-(1-carboxyvinyl)-alpha-D-glucosamine + NADPH + H(+). Its pathway is cell wall biogenesis; peptidoglycan biosynthesis. Cell wall formation. The sequence is that of UDP-N-acetylenolpyruvoylglucosamine reductase from Bartonella quintana (strain Toulouse) (Rochalimaea quintana).